Reading from the N-terminus, the 145-residue chain is Large ribosomal subunit protein uL11 (145 aa).

The protein belongs to the universal ribosomal protein uL11 family. In terms of assembly, part of the ribosomal stalk of the 50S ribosomal subunit. Interacts with L10 and the large rRNA to form the base of the stalk. L10 forms an elongated spine to which L12 dimers bind in a sequential fashion forming a multimeric L10(L12)X complex. Post-translationally, one or more lysine residues are methylated.

Functionally, forms part of the ribosomal stalk which helps the ribosome interact with GTP-bound translation factors. This is Large ribosomal subunit protein uL11 from Coxiella burnetii (strain Dugway 5J108-111).